Reading from the N-terminus, the 83-residue chain is Weak toxin DE-1 (83 aa).

Positions 1 to 21 are cleaved as a signal peptide; it reads MKTLLLTLVVVTIVCLDLGYS. Cystine bridges form between Cys-24-Cys-45, Cys-38-Cys-62, Cys-64-Cys-75, and Cys-76-Cys-81.

This sequence belongs to the three-finger toxin family. Short-chain subfamily. Type I alpha-neurotoxin sub-subfamily. As to expression, expressed by the venom gland.

The protein localises to the secreted. The chain is Weak toxin DE-1 from Ophiophagus hannah (King cobra).